A 329-amino-acid chain; its full sequence is MQEKSRVFKWDINDFKEKSFKKPTLNLTWDYKFNPHYDEILINENIEWLKGTKLFSNESDYEKFISLKTSYMNAYLYSHGNREVFRYINRLNEYIYIIDDLYLEDSVYGQEWVNQLFDRNSKLFKEDHGSSFLWQIFDDIRSAGNSEATDYLIKKTKEWMDSVILFNSKEVHSNYTFEEYSSYRGVEVGMIFALACTKVHLPPLCDEIENHPLYIELLGKYFNSIQVLINDIHSFNKEIKSSRLGNYVKIAAYQLGSIQSAMDHSQKICNDYIEAMEEKCLELESIFPNNKDLETHLYLIKTIIAGNYYGSKDPNYPRYNGTVCEADYK.

Positions 99 to 104 match the DDxx(x)D/E motif motif; sequence DDLYLE. An NDxxSxxxD/E motif motif is present at residues 230 to 238; the sequence is NDIHSFNKE.

This sequence belongs to the terpene synthase family.

Functionally, terpene synthase that converts its substrate farnesyl diphosphate (FPP) into 6 yet unidentified sesquiterpenes. This is Terpene synthase 7 from Dictyostelium purpureum (Slime mold).